Consider the following 520-residue polypeptide: Pleckstrin homology domain-containing family O member 1-A (520 aa).

Disordered stretches follow at residues 1-23 (MKKS…QPDK), 208-296 (SLDK…GHLQ), 313-439 (IQEQ…KSTD), and 497-520 (QARQ…QKSP). The region spanning 20-131 (QPDKVGWIRR…WINVLNTAIT (112 aa)) is the PH domain. Positions 227-241 (PASNTEAQEKTSSLP) are enriched in polar residues. Basic and acidic residues-rich tracts occupy residues 242–255 (RKSE…DHPR) and 333–347 (DSPR…DSPH). Residues 348 to 361 (SKGSSSPHSANSPS) show a composition bias toward low complexity. Basic and acidic residues-rich tracts occupy residues 363–385 (RAKD…DSPR) and 396–418 (KSID…DLTH). The segment covering 420–439 (KGSQSPLSTGSNSPHMKSTD) has biased composition (polar residues). Residues 497 to 506 (QARQRREELS) show a composition bias toward basic and acidic residues. Over residues 509–520 (GMASQKLQQKSP) the composition is skewed to polar residues.

C-terminal fragments could be released during apoptosis via caspase-3-dependent cleavage.

The protein localises to the membrane. Its subcellular location is the nucleus. It is found in the cytoplasm. In terms of biological role, plays a role in the regulation of the actin cytoskeleton through its interactions with actin capping protein (CP). This chain is Pleckstrin homology domain-containing family O member 1-A (plekho1a), found in Danio rerio (Zebrafish).